A 256-amino-acid polypeptide reads, in one-letter code: Extracellular serine-rich protein ARB_03024 (256 aa).

Positions 1–19 (MVATKSVLSAVALAGVAAA) are cleaved as a signal peptide. Residues 135 to 235 (KIVPQSGSPT…TPTASPGAAA (101 aa)) are disordered. Residues 149–159 (GTLGGSGGSGG) are compositionally biased toward gly residues. Composition is skewed to low complexity over residues 160–204 (SSSS…QSTP) and 215–235 (PSATGSGSHSSTPTASPGAAA). A lipid anchor (GPI-anchor amidated alanine) is attached at A233. Positions 234-256 (AAGLKGSAVLAGVVALGAWIGLL) are cleaved as a propeptide — removed in mature form.

The protein resides in the cell membrane. It localises to the secreted. This chain is Extracellular serine-rich protein ARB_03024, found in Arthroderma benhamiae (strain ATCC MYA-4681 / CBS 112371) (Trichophyton mentagrophytes).